Consider the following 493-residue polypeptide: Probable mannosyl-oligosaccharide alpha-1,2-mannosidase 1B (493 aa).

The first 18 residues, 1–18 (MHLPSLSVALALVSSSLA), serve as a signal peptide directing secretion. N-linked (GlcNAc...) asparagine glycosylation is found at Asn87 and Asn174. Cys324 and Cys353 are joined by a disulfide. Glu367 functions as the Proton donor in the catalytic mechanism. A glycan (N-linked (GlcNAc...) asparagine) is linked at Asn489.

The protein belongs to the glycosyl hydrolase 47 family. As to quaternary structure, monomer. Ca(2+) is required as a cofactor. Requires Mg(2+) as cofactor.

It localises to the cytoplasmic vesicle lumen. It catalyses the reaction N(4)-(alpha-D-Man-(1-&gt;2)-alpha-D-Man-(1-&gt;2)-alpha-D-Man-(1-&gt;3)-[alpha-D-Man-(1-&gt;2)-alpha-D-Man-(1-&gt;3)-[alpha-D-Man-(1-&gt;2)-alpha-D-Man-(1-&gt;6)]-alpha-D-Man-(1-&gt;6)]-beta-D-Man-(1-&gt;4)-beta-D-GlcNAc-(1-&gt;4)-beta-D-GlcNAc)-L-asparaginyl-[protein] (N-glucan mannose isomer 9A1,2,3B1,2,3) + 4 H2O = N(4)-(alpha-D-Man-(1-&gt;3)-[alpha-D-Man-(1-&gt;3)-[alpha-D-Man-(1-&gt;6)]-alpha-D-Man-(1-&gt;6)]-beta-D-Man-(1-&gt;4)-beta-D-GlcNAc-(1-&gt;4)-beta-D-GlcNAc)-L-asparaginyl-[protein] (N-glucan mannose isomer 5A1,2) + 4 beta-D-mannose. The enzyme catalyses N(4)-(alpha-D-Man-(1-&gt;2)-alpha-D-Man-(1-&gt;2)-alpha-D-Man-(1-&gt;3)-[alpha-D-Man-(1-&gt;3)-[alpha-D-Man-(1-&gt;2)-alpha-D-Man-(1-&gt;6)]-alpha-D-Man-(1-&gt;6)]-beta-D-Man-(1-&gt;4)-beta-D-GlcNAc-(1-&gt;4)-beta-D-GlcNAc)-L-asparaginyl-[protein] (N-glucan mannose isomer 8A1,2,3B1,3) + 3 H2O = N(4)-(alpha-D-Man-(1-&gt;3)-[alpha-D-Man-(1-&gt;3)-[alpha-D-Man-(1-&gt;6)]-alpha-D-Man-(1-&gt;6)]-beta-D-Man-(1-&gt;4)-beta-D-GlcNAc-(1-&gt;4)-beta-D-GlcNAc)-L-asparaginyl-[protein] (N-glucan mannose isomer 5A1,2) + 3 beta-D-mannose. It functions in the pathway protein modification; protein glycosylation. Functionally, involved in the maturation of Asn-linked oligosaccharides. Progressively trims alpha-1,2-linked mannose residues from Man(9)GlcNAc(2) to produce Man(5)GlcNAc(2). This chain is Probable mannosyl-oligosaccharide alpha-1,2-mannosidase 1B (mns1B), found in Neosartorya fischeri (strain ATCC 1020 / DSM 3700 / CBS 544.65 / FGSC A1164 / JCM 1740 / NRRL 181 / WB 181) (Aspergillus fischerianus).